The sequence spans 327 residues: Dolichyl-phosphate beta-glucosyltransferase (327 aa).

The Lumenal segment spans residues 1-15 (MIDLFINIASFTIYG). A helical transmembrane segment spans residues 16–36 (IPVIPLFIIVFVILSYYLLLL). Residues 37–327 (HDESPLWLEK…YLLGIWKIKS (291 aa)) are Cytoplasmic-facing.

Belongs to the glycosyltransferase 2 family.

It localises to the endoplasmic reticulum membrane. It catalyses the reaction a di-trans,poly-cis-dolichyl phosphate + UDP-alpha-D-glucose = a di-trans,poly-cis-dolichyl beta-D-glucosyl phosphate + UDP. Its pathway is protein modification; protein glycosylation. In terms of biological role, endoplasmic reticulum membrane-bound UDP-glucose:dolichyl-phosphate glucosyltransferase involved in protein N-linked glycosylation. The chain is Dolichyl-phosphate beta-glucosyltransferase (alg5) from Dictyostelium discoideum (Social amoeba).